The following is a 279-amino-acid chain: S-methyl-5'-thioadenosine phosphorylase (279 aa).

Phosphate is bound by residues Ser-13, 55-56, and 88-89; these read RH and TA. Substrate is bound at residue Met-191. Thr-192 lines the phosphate pocket. Residue 215-217 coordinates substrate; that stretch reads DYD.

The protein belongs to the PNP/MTAP phosphorylase family. MTAP subfamily. Homotrimer.

It localises to the cytoplasm. The protein localises to the nucleus. It catalyses the reaction S-methyl-5'-thioadenosine + phosphate = 5-(methylsulfanyl)-alpha-D-ribose 1-phosphate + adenine. It participates in amino-acid biosynthesis; L-methionine biosynthesis via salvage pathway; S-methyl-5-thio-alpha-D-ribose 1-phosphate from S-methyl-5'-thioadenosine (phosphorylase route): step 1/1. Functionally, catalyzes the reversible phosphorylation of S-methyl-5'-thioadenosine (MTA) to adenine and 5-methylthioribose-1-phosphate. Involved in the breakdown of MTA, a major by-product of polyamine biosynthesis. Responsible for the first step in the methionine salvage pathway after MTA has been generated from S-adenosylmethionine. Has broad substrate specificity with 6-aminopurine nucleosides as preferred substrates. In Anopheles darlingi (Mosquito), this protein is S-methyl-5'-thioadenosine phosphorylase.